Reading from the N-terminus, the 476-residue chain is ATP synthase subunit beta (476 aa).

152 to 159 contributes to the ATP binding site; it reads GGAGVGKT.

It belongs to the ATPase alpha/beta chains family. F-type ATPases have 2 components, CF(1) - the catalytic core - and CF(0) - the membrane proton channel. CF(1) has five subunits: alpha(3), beta(3), gamma(1), delta(1), epsilon(1). CF(0) has three main subunits: a(1), b(2) and c(9-12). The alpha and beta chains form an alternating ring which encloses part of the gamma chain. CF(1) is attached to CF(0) by a central stalk formed by the gamma and epsilon chains, while a peripheral stalk is formed by the delta and b chains.

Its subcellular location is the cell inner membrane. The catalysed reaction is ATP + H2O + 4 H(+)(in) = ADP + phosphate + 5 H(+)(out). Functionally, produces ATP from ADP in the presence of a proton gradient across the membrane. The catalytic sites are hosted primarily by the beta subunits. The polypeptide is ATP synthase subunit beta (Acidiphilium cryptum (strain JF-5)).